A 134-amino-acid polypeptide reads, in one-letter code: Acyl carrier protein SF2, chloroplastic (134 aa).

The transit peptide at 1–51 (MSTTFCSSVSMQATSLAATTRISFQKPALVSTTNLSFNLRRSIPTRFSISC) directs the protein to the chloroplast. The Carrier domain maps to 55-130 (PETVEKVSKI…EAAELIEELV (76 aa)). An O-(pantetheine 4'-phosphoryl)serine modification is found at serine 90.

This sequence belongs to the acyl carrier protein (ACP) family. In terms of processing, 4'-phosphopantetheine is transferred from CoA to a specific serine of apo-ACP by acpS. This modification is essential for activity because fatty acids are bound in thioester linkage to the sulfhydryl of the prosthetic group.

It localises to the plastid. Its subcellular location is the chloroplast. Its pathway is lipid metabolism; fatty acid biosynthesis. Its function is as follows. Carrier of the growing fatty acid chain in fatty acid biosynthesis. This is Acyl carrier protein SF2, chloroplastic (Acl1.1) from Brassica campestris (Field mustard).